The primary structure comprises 130 residues: Small ribosomal subunit protein uS11 (130 aa).

The protein belongs to the universal ribosomal protein uS11 family. In terms of assembly, part of the 30S ribosomal subunit. Interacts with proteins S7 and S18. Binds to IF-3.

Located on the platform of the 30S subunit, it bridges several disparate RNA helices of the 16S rRNA. Forms part of the Shine-Dalgarno cleft in the 70S ribosome. The chain is Small ribosomal subunit protein uS11 from Shewanella denitrificans (strain OS217 / ATCC BAA-1090 / DSM 15013).